Here is a 436-residue protein sequence, read N- to C-terminus: UDP-N-acetylglucosamine 1-carboxyvinyltransferase 1 (436 aa).

Phosphoenolpyruvate is bound at residue 22 to 23 (KN). Arg93 contributes to the UDP-N-acetyl-alpha-D-glucosamine binding site. Catalysis depends on Cys117, which acts as the Proton donor. Cys117 carries the 2-(S-cysteinyl)pyruvic acid O-phosphothioketal modification. Residues 122–126 (RPIDQ), Asp306, and Val328 contribute to the UDP-N-acetyl-alpha-D-glucosamine site.

The protein belongs to the EPSP synthase family. MurA subfamily.

It localises to the cytoplasm. The catalysed reaction is phosphoenolpyruvate + UDP-N-acetyl-alpha-D-glucosamine = UDP-N-acetyl-3-O-(1-carboxyvinyl)-alpha-D-glucosamine + phosphate. The protein operates within cell wall biogenesis; peptidoglycan biosynthesis. In terms of biological role, cell wall formation. Adds enolpyruvyl to UDP-N-acetylglucosamine. This is UDP-N-acetylglucosamine 1-carboxyvinyltransferase 1 from Bacillus licheniformis (strain ATCC 14580 / DSM 13 / JCM 2505 / CCUG 7422 / NBRC 12200 / NCIMB 9375 / NCTC 10341 / NRRL NRS-1264 / Gibson 46).